The chain runs to 663 residues: 4-hydroxy-3-methylbut-2-en-1-yl diphosphate synthase (flavodoxin) (663 aa).

Residues Cys568, Cys571, Cys602, and Glu609 each contribute to the [4Fe-4S] cluster site.

The protein belongs to the IspG family. It depends on [4Fe-4S] cluster as a cofactor.

It catalyses the reaction (2E)-4-hydroxy-3-methylbut-2-enyl diphosphate + oxidized [flavodoxin] + H2O + 2 H(+) = 2-C-methyl-D-erythritol 2,4-cyclic diphosphate + reduced [flavodoxin]. Its pathway is isoprenoid biosynthesis; isopentenyl diphosphate biosynthesis via DXP pathway; isopentenyl diphosphate from 1-deoxy-D-xylulose 5-phosphate: step 5/6. Functionally, converts 2C-methyl-D-erythritol 2,4-cyclodiphosphate (ME-2,4cPP) into 1-hydroxy-2-methyl-2-(E)-butenyl 4-diphosphate. The sequence is that of 4-hydroxy-3-methylbut-2-en-1-yl diphosphate synthase (flavodoxin) from Leptospira interrogans serogroup Icterohaemorrhagiae serovar copenhageni (strain Fiocruz L1-130).